The primary structure comprises 23 residues: Conolysin-Mt1 (23 aa).

Ser-22 is modified (serine amide).

As to expression, expressed by the venom duct.

It is found in the secreted. Its function is as follows. This cytolytic peptide has ability to disrupt the integrity of cell membranes from both prokaryotes and eukaryotes. It permeabilizes both negatively charged prokaryotic (PE:PG) and zwitterionic eukaryotic (PC:cholesterol) model membranes. It has potent hemolytic activity on human erythrocytes and exhibits low antimicrobial activity against the Gram-negative bacterium E.coli (MIC&gt;50 uM) and the Gram-positive bacterium S.aureus (MIC=25-50 uM). Intracranial injection causes mice to shuffle backward until the encounter an obstacle, at which time the mouse jump into the air. The backward shuffle is reminiscent to the signature dance 'moonwalk' that gained widespread popularity after being performed by Michael Jackson. This is Conolysin-Mt1 from Conus mustelinus (Weasel cone).